A 190-amino-acid chain; its full sequence is Putative manganese efflux pump MntP (190 aa).

6 consecutive transmembrane segments (helical) span residues 3–23 (FLQISLLSIGVAADAFACSVV), 37–57 (LVLAGIFGVFQAAMPLIGWFI), 72–88 (HWIAFALLGIVGTKMIW), 111–131 (IILGLATSIDALAVGMGLAFV), 138–158 (VALSMGSITFALSLAGAWIGH), and 164–184 (FGKWATILGGIILIGIGANIV).

Belongs to the MntP (TC 9.B.29) family.

The protein localises to the cell membrane. Probably functions as a manganese efflux pump. In Corynebacterium glutamicum (strain ATCC 13032 / DSM 20300 / JCM 1318 / BCRC 11384 / CCUG 27702 / LMG 3730 / NBRC 12168 / NCIMB 10025 / NRRL B-2784 / 534), this protein is Putative manganese efflux pump MntP.